Reading from the N-terminus, the 268-residue chain is Thymidylate synthase (268 aa).

Arg27 serves as a coordination point for dUMP. His57 serves as a coordination point for (6R)-5,10-methylene-5,6,7,8-tetrahydrofolate. 132–133 (RR) contributes to the dUMP binding site. Cys152 acts as the Nucleophile in catalysis. DUMP contacts are provided by residues 172 to 175 (RSAD), Asn183, and 213 to 215 (HVY). (6R)-5,10-methylene-5,6,7,8-tetrahydrofolate is bound at residue Asp175. Ala267 is a binding site for (6R)-5,10-methylene-5,6,7,8-tetrahydrofolate.

It belongs to the thymidylate synthase family. Bacterial-type ThyA subfamily. Homodimer.

It localises to the cytoplasm. The catalysed reaction is dUMP + (6R)-5,10-methylene-5,6,7,8-tetrahydrofolate = 7,8-dihydrofolate + dTMP. It functions in the pathway pyrimidine metabolism; dTTP biosynthesis. In terms of biological role, catalyzes the reductive methylation of 2'-deoxyuridine-5'-monophosphate (dUMP) to 2'-deoxythymidine-5'-monophosphate (dTMP) while utilizing 5,10-methylenetetrahydrofolate (mTHF) as the methyl donor and reductant in the reaction, yielding dihydrofolate (DHF) as a by-product. This enzymatic reaction provides an intracellular de novo source of dTMP, an essential precursor for DNA biosynthesis. This is Thymidylate synthase from Kineococcus radiotolerans (strain ATCC BAA-149 / DSM 14245 / SRS30216).